The sequence spans 440 residues: MLETSQTIPELVNWTREREFSLSLSTERLAFLLAIAIYNNERLDGEMLETDLIDIFRHISNTFEQSAETVSTRANNSINELVKQRFLNRFSSEFTEGLSIYRLTPLGVGVSDYYIRQREFSALRLSVQLSIVADEIQRASESAEEGGDEHYWRKNVFAPLKYSVAEIFDSIDLSQRMMDENQQHIKEEIAELLTKDWQTAIASCERLLDETSGNLRELQDTLNAAGDKLQSQLLRIQDCVIGHDNLYFVEQLIVDLQAKLDRIISWGQQAIDLWIGYDRHVHKFIRTAIDLDKNRVFSQRLRQSIHHYFDHPWFLWIAQAERLIDLREEELTLREEEALGELPEELQYESLADLHEQIVETMQSLLIEYRLQNTPIDLSEVLTAQLKQYPLANHFDIARIIIDQAVRLGLAQDDLNGIYPNWRSINENGAEVQAHVIDKY.

A leucine-zipper region spans residues 208 to 236; it reads LDETSGNLRELQDTLNAAGDKLQSQLLRI.

This sequence belongs to the MukF family. Interacts, and probably forms a ternary complex, with MukE and MukB via its C-terminal region. The complex formation is stimulated by calcium or magnesium. It is required for an interaction between MukE and MukB.

It is found in the cytoplasm. Its subcellular location is the nucleoid. Its function is as follows. Involved in chromosome condensation, segregation and cell cycle progression. May participate in facilitating chromosome segregation by condensation DNA from both sides of a centrally located replisome during cell division. Not required for mini-F plasmid partitioning. Probably acts via its interaction with MukB and MukE. Overexpression results in anucleate cells. It has a calcium binding activity. This is Chromosome partition protein MukF from Histophilus somni (strain 2336) (Haemophilus somnus).